We begin with the raw amino-acid sequence, 807 residues long: Enhancer of polycomb homolog 2 (807 aa).

Residues K135, K195, K324, and K362 each participate in a glycyl lysine isopeptide (Lys-Gly) (interchain with G-Cter in SUMO2) cross-link. The tract at residues 376 to 396 is disordered; the sequence is DEFPQVLSPVSEPEEENDPDG. The residue at position 538 (S538) is a Phosphoserine. The segment covering 600–613 has biased composition (low complexity); that stretch reads QLQQKQQSQHSSQQ. 2 disordered regions span residues 600–628 and 645–673; these read QLQQ…DCMS and SAPV…QPSG. Polar residues-rich tracts occupy residues 614-628 and 657-673; these read THPK…DCMS and EQNT…QPSG. S754 is modified (phosphoserine).

The protein belongs to the enhancer of polycomb family.

The protein resides in the nucleus. May play a role in transcription or DNA repair. This is Enhancer of polycomb homolog 2 (EPC2) from Homo sapiens (Human).